The primary structure comprises 265 residues: Phosphatidylglycerol--prolipoprotein diacylglyceryl transferase (265 aa).

Transmembrane regions (helical) follow at residues 10–30, 56–76, 87–107, and 117–137; these read VAIALGPLKVHWYGLMYLIGI, LVFWVALGVIAGGRLGYVLFY, LILQVWRGGMSFHGGLLGVLL, and GKGFFELMDFIAPLVPIGLGA. A 1,2-diacyl-sn-glycero-3-phospho-(1'-sn-glycerol) is bound at residue arginine 139. Transmembrane regions (helical) follow at residues 172–192, 200–220, and 227–247; these read PSQLYQFALEGVALFAILWFY, MAVSGLFALCYGIFRFIVEFV, and LGYLAFGWLTMGQLLCLPMIL.

It belongs to the Lgt family.

It is found in the cell inner membrane. It carries out the reaction L-cysteinyl-[prolipoprotein] + a 1,2-diacyl-sn-glycero-3-phospho-(1'-sn-glycerol) = an S-1,2-diacyl-sn-glyceryl-L-cysteinyl-[prolipoprotein] + sn-glycerol 1-phosphate + H(+). It participates in protein modification; lipoprotein biosynthesis (diacylglyceryl transfer). Functionally, catalyzes the transfer of the diacylglyceryl group from phosphatidylglycerol to the sulfhydryl group of the N-terminal cysteine of a prolipoprotein, the first step in the formation of mature lipoproteins. The protein is Phosphatidylglycerol--prolipoprotein diacylglyceryl transferase of Azotobacter vinelandii (strain DJ / ATCC BAA-1303).